A 410-amino-acid chain; its full sequence is Peptidase T (410 aa).

H79 provides a ligand contact to Zn(2+). D81 is an active-site residue. Position 142 (D142) interacts with Zn(2+). Catalysis depends on E176, which acts as the Proton acceptor. Positions 177, 199, and 381 each coordinate Zn(2+).

Belongs to the peptidase M20B family. Requires Zn(2+) as cofactor.

The protein localises to the cytoplasm. It carries out the reaction Release of the N-terminal residue from a tripeptide.. In terms of biological role, cleaves the N-terminal amino acid of tripeptides. This Geobacillus sp. (strain WCH70) protein is Peptidase T.